A 538-amino-acid polypeptide reads, in one-letter code: MENKTPIFFSLSIFLSLLNCALGGNDLLSCLTFNGVRNHTVFSADSDSDFNRFLHLSIQNPLFQNSLISKPSAIILPGSKEELSNTIRCIRKGSWTIRLRSGGHSYEGLSYTSDTPFILIDLMNLNRVSIDLESETAWVESGSTLGELYYAITESSSKLGFTAGWCPTVGTGGHISGGGFGMMSRKYGLAADNVVDAILIDANGAILDRQAMGEDVFWAIRGGGGGVWGAIYAWKIKLLPVPEKVTVFRVTKNVAIDEATSLLHKWQFVAEELEEDFTLSVLGGADEKQVWLTMLGFHFGLKTVAKSTFDLLFPELGLVEEDYLEMSWGESFAYLAGLETVSQLNNRFLKFDERAFKTKVDLTKEPLPSKAFYGLLERLSKEPNGFIALNGFGGQMSKISSDFTPFPHRSGTRLMVEYIVAWNQSEQKKKTEFLDWLEKVYEFMKPFVSKNPRLGYVNHIDLDLGGIDWGNKTVVNNAIEISRSWGESYFLSNYERLIRAKTLIDPNNVFNHPQSIPPMANFDYLEKTLGSDGGEVVI.

The signal sequence occupies residues 1–23 (MENKTPIFFSLSIFLSLLNCALG). A disulfide bond links C30 and C89. An N-linked (GlcNAc...) asparagine glycan is attached at N38. The FAD-binding PCMH-type domain occupies 67–241 (LISKPSAIIL…YAWKIKLLPV (175 aa)). The 6-(S-cysteinyl)-8alpha-(pros-histidyl)-FAD (His-Cys) cross-link spans 104 to 166 (HSYEGLSYTS…SKLGFTAGWC (63 aa)). N-linked (GlcNAc...) asparagine glycosylation is found at N423 and N471.

It belongs to the oxygen-dependent FAD-linked oxidoreductase family. The cofactor is FAD. A metal cation is required as a cofactor. Post-translationally, the FAD cofactor is bound via a bicovalent 6-S-cysteinyl, 8alpha-N1-histidyl FAD linkage.

It is found in the cytoplasmic vesicle. It carries out the reaction (S)-reticuline + O2 = (S)-scoulerine + H2O2 + H(+). The protein operates within alkaloid biosynthesis; (S)-scoulerine biosynthesis; (S)-scoulerine from (S)-reticuline: step 1/1. Its function is as follows. Essential to the formation of benzophenanthridine alkaloids in the response of plants to pathogenic attack. Catalyzes the stereospecific conversion of the N-methyl moiety of (S)-reticuline into the berberine bridge carbon of (S)-scoulerine. This is Reticuline oxidase (BBE1) from Eschscholzia californica (California poppy).